Here is a 138-residue protein sequence, read N- to C-terminus: Phospholipase A2 group V (138 aa).

The first 20 residues, 1 to 20 (MKGLLPLAWFLACSVPAVQG), serve as a signal peptide directing secretion. Cystine bridges form between cysteine 46/cysteine 137, cysteine 48/cysteine 64, cysteine 63/cysteine 117, cysteine 70/cysteine 110, cysteine 79/cysteine 103, and cysteine 97/cysteine 108. Ca(2+) is bound by residues tyrosine 47, glycine 49, and glycine 51. Histidine 67 is a catalytic residue. A Ca(2+)-binding site is contributed by aspartate 68. Aspartate 111 is a catalytic residue.

This sequence belongs to the phospholipase A2 family. It depends on Ca(2+) as a cofactor. This enzyme lacks one of the seven disulfide bonds found in similar PLA2 proteins. In terms of tissue distribution, heart, placenta and less abundantly, in lung. Detected in the outer and inner plexiform layers of the retina (at protein level). Expressed in monocytes and macrophages.

The protein resides in the secreted. The protein localises to the cell membrane. Its subcellular location is the cytoplasmic vesicle. It localises to the phagosome. It is found in the recycling endosome. The protein resides in the golgi apparatus. The protein localises to the cis-Golgi network. Its subcellular location is the trans-Golgi network. The enzyme catalyses a 1,2-diacyl-sn-glycero-3-phosphocholine + H2O = a 1-acyl-sn-glycero-3-phosphocholine + a fatty acid + H(+). It catalyses the reaction 1-hexadecanoyl-2-(9Z-octadecenoyl)-sn-glycero-3-phosphocholine + H2O = 1-hexadecanoyl-sn-glycero-3-phosphocholine + (9Z)-octadecenoate + H(+). It carries out the reaction 1-hexadecanoyl-2-(5Z,8Z,11Z,14Z-eicosatetraenoyl)-sn-glycero-3-phosphocholine + H2O = 1-hexadecanoyl-sn-glycero-3-phosphocholine + (5Z,8Z,11Z,14Z)-eicosatetraenoate + H(+). The catalysed reaction is 1-hexadecanoyl-2-(9Z,12Z-octadecadienoyl)-sn-glycero-3-phosphoethanolamine + H2O = 1-hexadecanoyl-sn-glycero-3-phosphoethanolamine + (9Z,12Z)-octadecadienoate + H(+). The enzyme catalyses 1-hexadecanoyl-2-(5Z,8Z,11Z,14Z-eicosatetraenoyl)-sn-glycero-3-phosphoethanolamine + H2O = 1-hexadecanoyl-sn-glycero-3-phosphoethanolamine + (5Z,8Z,11Z,14Z)-eicosatetraenoate + H(+). It catalyses the reaction 1-octadecanoyl-2-(5Z,8Z,11Z,14Z-eicosatetraenoyl)-sn-glycero-3-phospho-(1D-myo-inositol) + H2O = 1-octadecanoyl-sn-glycero-3-phospho-(1D-myo-inositol) + (5Z,8Z,11Z,14Z)-eicosatetraenoate + H(+). It carries out the reaction 1-hexadecanoyl-2-(9Z-octadecenoyl)-sn-glycero-3-phosphoglycerol + H2O = 1-hexadecanoyl-sn-glycero-3-phosphoglycerol + (9Z)-octadecenoate + H(+). The catalysed reaction is N-hexadecanoyl-1,2-di-(9Z-octadecenoyl)-sn-glycero-3-phosphoethanolamine + H2O = N-hexadecanoyl-1-(9Z-octadecenoyl)-sn-glycero-3-phosphoethanolamine + (9Z)-octadecenoate + H(+). The enzyme catalyses 1'-[1,2-di-(9Z-octadecenoyl)-sn-glycero-3-phospho]-3'-[1-(9Z-octadecenoyl)-sn-glycero-3-phospho]-glycerol + H2O = 1',3'-bis-[1-(9Z-octadecenoyl)-sn-glycero-3-phospho]-glycerol + (9Z)-octadecenoate + H(+). It catalyses the reaction 1',3'-bis[1,2-di-(9Z-octadecenoyl)-sn-glycero-3-phospho]-glycerol + H2O = 1'-[1,2-di-(9Z-octadecenoyl)-sn-glycero-3-phospho]-3'-[1-(9Z-octadecenoyl)-sn-glycero-3-phospho]-glycerol + (9Z)-octadecenoate + H(+). The protein operates within lipid metabolism; phospholipid metabolism. It participates in lipid metabolism; leukotriene B4 biosynthesis. It functions in the pathway lipid metabolism; leukotriene C4 biosynthesis. With respect to regulation, activated by cardiolipin. Secretory calcium-dependent phospholipase A2 that primarily targets extracellular phospholipids. Hydrolyzes the ester bond of the fatty acyl group attached at sn-2 position of phospholipids (phospholipase A2 activity), preferentially releasing fatty acyl groups with a low degree of unsaturation such as oleoyl (C18:1) and linoleoyl (C18:2) groups. Hydrolyzes low-density lipoprotein (LDL) phospholipids releasing unsaturated fatty acids that drive macrophage polarization toward an M2 phenotype. May act in an autocrine and paracrine manner. Contributes to lipid remodeling of cellular membranes at different subcellular locations and generation of lipid mediators involved in pathogen clearance. Cleaves sn-2 fatty acyl chains of cardiolipin, a major component of the inner membrane of mitochondria and bacterial membranes. Promotes phagocytosis of bacteria in macrophages through production of lysophosphatidylethanolamines. Displays bactericidal activity against Gram-positive bacteria by directly hydrolyzing phospholipids of the bacterial membrane. Promotes phagocytosis and killing of ingested fungi likely through controlling phagosome-lysosome fusion and phagosome maturation. Plays a role in biosynthesis of cysteinyl leukotrienes (CysLTs) in myeloid cells. In eosinophils, triggers perinuclear arachidonate release and LTC4 synthesis in a PLA2G4A-independent way. In neutrophils, amplifies CysLTs biosynthesis initiated by PLA2G4A. Promotes immune complex clearance in macrophages via stimulating synthesis of CysLTs, which act through CYSLTR1 to trigger phagocytosis. May regulate antigen processing in antigen-presenting cells. In pulmonary macrophages regulates IL33 production required for activation of group 2 innate lymphoid cells. May play a role in the biosynthesis of N-acyl ethanolamines that regulate energy metabolism. Hydrolyzes N-acyl phosphatidylethanolamines to N-acyl lysophosphatidylethanolamines, which are further cleaved by a lysophospholipase D to release N-acyl ethanolamines. This chain is Phospholipase A2 group V (PLA2G5), found in Homo sapiens (Human).